Consider the following 233-residue polypeptide: Large ribosomal subunit protein uL1 (233 aa).

It belongs to the universal ribosomal protein uL1 family. As to quaternary structure, part of the 50S ribosomal subunit.

In terms of biological role, binds directly to 23S rRNA. The L1 stalk is quite mobile in the ribosome, and is involved in E site tRNA release. Protein L1 is also a translational repressor protein, it controls the translation of the L11 operon by binding to its mRNA. In Rhodospirillum rubrum (strain ATCC 11170 / ATH 1.1.1 / DSM 467 / LMG 4362 / NCIMB 8255 / S1), this protein is Large ribosomal subunit protein uL1.